The primary structure comprises 91 residues: MFCVIYRSAKRDQTYLYVEKRDDFSRVPEELMKGFGTPQLAMLLPLDGRKQLVNADLEKVKTALKDQGYYLQLPPPPENLLKQHLEGEGKN.

Residues 1–85 (MFCVIYRSAK…PPENLLKQHL (85 aa)) enclose the YcgL domain.

The polypeptide is YcgL domain-containing protein Ent638_2370 (Enterobacter sp. (strain 638)).